The primary structure comprises 1165 residues: Leptin receptor (1165 aa).

Residues 1 to 21 (MICQKFCVVLLHWEFIYVITA) form the signal peptide. Residues 22 to 839 (FNLSYPITPW…QDDIEKHQSD (818 aa)) are Extracellular-facing. Asn-23, Asn-41, Asn-56, Asn-73, Asn-81, and Asn-98 each carry an N-linked (GlcNAc...) asparagine glycan. Disulfide bonds link Cys-37–Cys-90, Cys-89–Cys-99, Cys-131–Cys-142, Cys-186–Cys-196, and Cys-188–Cys-193. Residue Asn-187 is glycosylated (N-linked (GlcNAc...) asparagine). N-linked (GlcNAc...) asparagine glycosylation is found at Asn-206, Asn-276, Asn-347, and Asn-397. The 95-residue stretch at 239–333 (PPLGLHMEIT…TPRVFTTQDV (95 aa)) folds into the Fibronectin type-III 1 domain. The Ig-like domain maps to 331–429 (QDVIYFPPKI…HRYAELYVID (99 aa)). 5 disulfides stabilise this stretch: Cys-352–Cys-412, Cys-413–Cys-418, Cys-436–Cys-447, Cys-473–Cys-528, and Cys-488–Cys-498. The leptin-binding stretch occupies residues 467–484 (HRSSLYCSDIPSIHPISE). N-linked (GlcNAc...) asparagine glycans are attached at residues Asn-516, Asn-624, Asn-659, Asn-688, Asn-697, Asn-728, and Asn-750. Fibronectin type-III domains follow at residues 539-634 (PPSS…TVVM), 639-732 (PMRG…LTFS), and 740-833 (IVQS…QDDI). The short motif at 622–626 (WSNWS) is the WSXWS motif element. A helical membrane pass occupies residues 840 to 862 (AGLYVIVPVIISSSILLLGTLLI). Over 863–1165 (SHQRMKKLFW…MENKMCDLTV (303 aa)) the chain is Cytoplasmic. Positions 871–879 (FWEDVPNPK) match the Box 1 motif motif. The residue at position 882 (Ser-882) is a Phosphoserine. Residues 893-898 (ETFEHL) are required for JAK2 activation. Positions 898 to 906 (LFIKHTASV) are required for STAT3 phosphorylation. Position 986 is a phosphotyrosine; by JAK2 (Tyr-986). Tyr-1079 is subject to Phosphotyrosine. Phosphotyrosine; by JAK2 is present on Tyr-1141.

Belongs to the type I cytokine receptor family. Type 2 subfamily. In terms of assembly, present as a mixture of monomers and dimers. The phosphorylated receptor binds a number of SH2 domain-containing proteins such as JAK2, STAT3, PTPN11, and SOCS3. Interaction with SOCS3 inhibits JAK/STAT signaling and MAPK cascade. On ligand binding, phosphorylated on two conserved C-terminal tyrosine residues (isoform B only) by JAK2. Tyr-986 is required for complete binding and activation of PTPN11, ERK/FOS activation,for interaction with SOCS3 and SOCS3 mediated inhibition of leptin signaling. Phosphorylation on Tyr-1141 is required for STAT3 binding/activation. Phosphorylation of Tyr-1079 has a more accessory role. In terms of tissue distribution, isoform A is expressed in fetal liver and in hematopoietic tissues and choroid plexus. In adults highest expression in heart, liver, small intestine, prostate and ovary. Low level in lung and kidney. Isoform B is highly expressed in hypothalamus, but also in skeletal muscle. Detected in fundic and antral epithelial cells of the gastric mucosa. Isoform B and isoform A are expressed by NK cells (at protein level).

It is found in the cell membrane. Its subcellular location is the basolateral cell membrane. It localises to the secreted. In terms of biological role, receptor for hormone LEP/leptin. On ligand binding, mediates LEP central and peripheral effects through the activation of different signaling pathways such as JAK2/STAT3 and MAPK cascade/FOS. In the hypothalamus, LEP acts as an appetite-regulating factor that induces a decrease in food intake and an increase in energy consumption by inducing anorexinogenic factors and suppressing orexigenic neuropeptides, also regulates bone mass and secretion of hypothalamo-pituitary-adrenal hormones. In the periphery, increases basal metabolism, influences reproductive function, regulates pancreatic beta-cell function and insulin secretion, is pro-angiogenic and affects innate and adaptive immunity. Control of energy homeostasis and melanocortin production (stimulation of POMC and full repression of AgRP transcription) is mediated by STAT3 signaling, whereas distinct signals regulate NPY and the control of fertility, growth and glucose homeostasis. Involved in the regulation of counter-regulatory response to hypoglycemia by inhibiting neurons of the parabrachial nucleus. Has a specific effect on T lymphocyte responses, differentially regulating the proliferation of naive and memory T -ells. Leptin increases Th1 and suppresses Th2 cytokine production. Its function is as follows. May transport LEP across the blood-brain barrier. Binds LEP and mediates LEP endocytosis. Does not induce phosphorylation of and activate STAT3. Antagonizes Isoform A and isoform B-mediated LEP binding and endocytosis. The sequence is that of Leptin receptor (LEPR) from Homo sapiens (Human).